Consider the following 380-residue polypeptide: Cytochrome b (380 aa).

4 helical membrane-spanning segments follow: residues 34–54 (FGSL…LLAM), 78–99 (WLIR…YLHI), 114–134 (WNTG…GYVL), and 179–199 (FFAL…IHLT). Positions 84 and 98 each coordinate heme b. Heme b contacts are provided by His183 and His197. His202 is a binding site for a ubiquinone. 4 consecutive transmembrane segments (helical) span residues 227 to 247 (LKDI…ALFS), 289 to 309 (LGGV…PFLH), 321 to 341 (LSQL…WVGS), and 348 to 368 (FIII…ILFP).

The protein belongs to the cytochrome b family. As to quaternary structure, the cytochrome bc1 complex contains 11 subunits: 3 respiratory subunits (MT-CYB, CYC1 and UQCRFS1), 2 core proteins (UQCRC1 and UQCRC2) and 6 low-molecular weight proteins (UQCRH/QCR6, UQCRB/QCR7, UQCRQ/QCR8, UQCR10/QCR9, UQCR11/QCR10 and a cleavage product of UQCRFS1). This cytochrome bc1 complex then forms a dimer. It depends on heme b as a cofactor.

It is found in the mitochondrion inner membrane. Component of the ubiquinol-cytochrome c reductase complex (complex III or cytochrome b-c1 complex) that is part of the mitochondrial respiratory chain. The b-c1 complex mediates electron transfer from ubiquinol to cytochrome c. Contributes to the generation of a proton gradient across the mitochondrial membrane that is then used for ATP synthesis. In Pterodroma hypoleuca (Bonin petrel), this protein is Cytochrome b (MT-CYB).